The chain runs to 329 residues: 4-hydroxythreonine-4-phosphate dehydrogenase (329 aa).

Histidine 136 and threonine 137 together coordinate substrate. A divalent metal cation contacts are provided by histidine 166, histidine 211, and histidine 266. Substrate contacts are provided by lysine 274, asparagine 283, and arginine 292.

The protein belongs to the PdxA family. As to quaternary structure, homodimer. The cofactor is Zn(2+). Requires Mg(2+) as cofactor. Co(2+) serves as cofactor.

The protein localises to the cytoplasm. The catalysed reaction is 4-(phosphooxy)-L-threonine + NAD(+) = 3-amino-2-oxopropyl phosphate + CO2 + NADH. It participates in cofactor biosynthesis; pyridoxine 5'-phosphate biosynthesis; pyridoxine 5'-phosphate from D-erythrose 4-phosphate: step 4/5. Catalyzes the NAD(P)-dependent oxidation of 4-(phosphooxy)-L-threonine (HTP) into 2-amino-3-oxo-4-(phosphooxy)butyric acid which spontaneously decarboxylates to form 3-amino-2-oxopropyl phosphate (AHAP). This is 4-hydroxythreonine-4-phosphate dehydrogenase from Salmonella typhi.